Here is a 161-residue protein sequence, read N- to C-terminus: 6,7-dimethyl-8-ribityllumazine synthase (161 aa).

Residues tryptophan 31, 63 to 65 (SFE), and 85 to 87 (VVI) each bind 5-amino-6-(D-ribitylamino)uracil. 90–91 (GT) serves as a coordination point for (2S)-2-hydroxy-3-oxobutyl phosphate. Histidine 93 (proton donor) is an active-site residue. Phenylalanine 118 contributes to the 5-amino-6-(D-ribitylamino)uracil binding site. Arginine 132 contacts (2S)-2-hydroxy-3-oxobutyl phosphate.

The protein belongs to the DMRL synthase family.

It catalyses the reaction (2S)-2-hydroxy-3-oxobutyl phosphate + 5-amino-6-(D-ribitylamino)uracil = 6,7-dimethyl-8-(1-D-ribityl)lumazine + phosphate + 2 H2O + H(+). Its pathway is cofactor biosynthesis; riboflavin biosynthesis; riboflavin from 2-hydroxy-3-oxobutyl phosphate and 5-amino-6-(D-ribitylamino)uracil: step 1/2. Catalyzes the formation of 6,7-dimethyl-8-ribityllumazine by condensation of 5-amino-6-(D-ribitylamino)uracil with 3,4-dihydroxy-2-butanone 4-phosphate. This is the penultimate step in the biosynthesis of riboflavin. In Paenarthrobacter aurescens (strain TC1), this protein is 6,7-dimethyl-8-ribityllumazine synthase.